Reading from the N-terminus, the 126-residue chain is Large ribosomal subunit protein uL22c (126 aa).

The protein belongs to the universal ribosomal protein uL22 family. As to quaternary structure, part of the 50S ribosomal subunit.

Its subcellular location is the plastid. The protein localises to the chloroplast. Its function is as follows. This protein binds specifically to 23S rRNA. In terms of biological role, the globular domain of the protein is located near the polypeptide exit tunnel on the outside of the subunit, while an extended beta-hairpin is found that lines the wall of the exit tunnel in the center of the 70S ribosome. This chain is Large ribosomal subunit protein uL22c (rpl22), found in Cryptomeria japonica (Japanese cedar).